The primary structure comprises 361 residues: Glycerophosphodiester phosphodiesterase GDPD1, chloroplastic (361 aa).

A chloroplast-targeting transit peptide spans 1–53; it reads MSLKAIHVSEVPSLDHFPENPSLICSSRKANNKFVVVGHRGHGMNMSQSPDLR. The GP-PDE domain maps to 54-323; sequence FSALKENSIL…DHVEEITEAV (270 aa).

The protein belongs to the glycerophosphoryl diester phosphodiesterase family. Mg(2+) is required as a cofactor. As to expression, expressed in roots, shoots, rosette leaves, stems, flowers and siliques.

It is found in the plastid. The protein localises to the chloroplast. It catalyses the reaction a sn-glycero-3-phosphodiester + H2O = an alcohol + sn-glycerol 3-phosphate + H(+). In terms of biological role, hydrolyzes glycerolphosphoglycerol, glycerophosphocholine and glycerophosphoethanolamine in vitro. May be involved in release of inorganic phosphate (Pi) from phospholipids during Pi starvation. The chain is Glycerophosphodiester phosphodiesterase GDPD1, chloroplastic from Arabidopsis thaliana (Mouse-ear cress).